The following is a 102-amino-acid chain: UPF0213 protein XAC3202 (102 aa).

Residues 5-80 (KPWHLYLLLC…KRLPRARKLA (76 aa)) enclose the GIY-YIG domain.

It belongs to the UPF0213 family.

This Xanthomonas axonopodis pv. citri (strain 306) protein is UPF0213 protein XAC3202.